Consider the following 163-residue polypeptide: uncharacterized protein (163 aa).

The segment at 23-113 (DFPEEPPLWV…QVADGVHSQQ (91 aa)) is disordered. Position 102 is a phosphoserine (S102).

This is an uncharacterized protein from Mus musculus (Mouse).